The primary structure comprises 379 residues: Quinolinate synthase (379 aa).

Histidine 60 and serine 81 together coordinate iminosuccinate. Position 126 (cysteine 126) interacts with [4Fe-4S] cluster. Iminosuccinate-binding positions include 152 to 154 (YAN) and serine 169. Cysteine 213 serves as a coordination point for [4Fe-4S] cluster. Residues 239–241 (HPE) and threonine 256 contribute to the iminosuccinate site. Cysteine 310 contributes to the [4Fe-4S] cluster binding site.

It belongs to the quinolinate synthase family. Type 1 subfamily. [4Fe-4S] cluster is required as a cofactor.

The protein localises to the cytoplasm. It carries out the reaction iminosuccinate + dihydroxyacetone phosphate = quinolinate + phosphate + 2 H2O + H(+). It functions in the pathway cofactor biosynthesis; NAD(+) biosynthesis; quinolinate from iminoaspartate: step 1/1. Catalyzes the condensation of iminoaspartate with dihydroxyacetone phosphate to form quinolinate. In Herminiimonas arsenicoxydans, this protein is Quinolinate synthase.